The primary structure comprises 657 residues: Glycogen debranching enzyme (657 aa).

The Nucleophile role is filled by aspartate 336. Glutamate 371 serves as the catalytic Proton donor. A disordered region spans residues 460–479 (ANGEENRDGTNNNYSNNHGK).

Belongs to the glycosyl hydrolase 13 family.

It catalyses the reaction Hydrolysis of (1-&gt;6)-alpha-D-glucosidic linkages to branches with degrees of polymerization of three or four glucose residues in limit dextrin.. Its pathway is glycan degradation; glycogen degradation. Functionally, removes maltotriose and maltotetraose chains that are attached by 1,6-alpha-linkage to the limit dextrin main chain, generating a debranched limit dextrin. The polypeptide is Glycogen debranching enzyme (Shigella dysenteriae serotype 1 (strain Sd197)).